The following is a 336-amino-acid chain: Phospho-N-acetylmuramoyl-pentapeptide-transferase (336 aa).

The next 10 helical transmembrane spans lie at 3-23 (LTLI…PYFI), 53-73 (GGTV…LFSI), 78-98 (SLAL…IGFL), 118-138 (LALQ…PSGI), 143-163 (VFGY…FWVV), 174-194 (GIDG…GVIA), 200-220 (FDVL…FCFN), 226-246 (VFMG…ISIA), 251-271 (WTLL…MLQV), and 316-336 (AFLW…LYVF).

This sequence belongs to the glycosyltransferase 4 family. MraY subfamily. Mg(2+) is required as a cofactor.

The protein localises to the cell membrane. The enzyme catalyses UDP-N-acetyl-alpha-D-muramoyl-L-alanyl-gamma-D-glutamyl-L-lysyl-D-alanyl-D-alanine + di-trans,octa-cis-undecaprenyl phosphate = Mur2Ac(oyl-L-Ala-gamma-D-Glu-L-Lys-D-Ala-D-Ala)-di-trans,octa-cis-undecaprenyl diphosphate + UMP. It participates in cell wall biogenesis; peptidoglycan biosynthesis. In terms of biological role, catalyzes the initial step of the lipid cycle reactions in the biosynthesis of the cell wall peptidoglycan: transfers peptidoglycan precursor phospho-MurNAc-pentapeptide from UDP-MurNAc-pentapeptide onto the lipid carrier undecaprenyl phosphate, yielding undecaprenyl-pyrophosphoryl-MurNAc-pentapeptide, known as lipid I. This chain is Phospho-N-acetylmuramoyl-pentapeptide-transferase, found in Streptococcus pyogenes serotype M4 (strain MGAS10750).